The following is a 321-amino-acid chain: UDP-N-acetylenolpyruvoylglucosamine reductase (321 aa).

The region spanning 36-203 is the FAD-binding PCMH-type domain; that stretch reads FRAGGLAEVM…TGALFEGYPE (168 aa). Arg183 is an active-site residue. Catalysis depends on Ser232, which acts as the Proton donor. Glu302 is a catalytic residue.

It belongs to the MurB family. It depends on FAD as a cofactor.

Its subcellular location is the cytoplasm. The catalysed reaction is UDP-N-acetyl-alpha-D-muramate + NADP(+) = UDP-N-acetyl-3-O-(1-carboxyvinyl)-alpha-D-glucosamine + NADPH + H(+). The protein operates within cell wall biogenesis; peptidoglycan biosynthesis. Functionally, cell wall formation. The polypeptide is UDP-N-acetylenolpyruvoylglucosamine reductase (Agrobacterium fabrum (strain C58 / ATCC 33970) (Agrobacterium tumefaciens (strain C58))).